Here is a 186-residue protein sequence, read N- to C-terminus: Nicotinamide-nucleotide adenylyltransferase (186 aa).

It belongs to the archaeal NMN adenylyltransferase family.

The protein resides in the cytoplasm. The enzyme catalyses beta-nicotinamide D-ribonucleotide + ATP + H(+) = diphosphate + NAD(+). It participates in cofactor biosynthesis; NAD(+) biosynthesis; NAD(+) from nicotinamide D-ribonucleotide: step 1/1. The polypeptide is Nicotinamide-nucleotide adenylyltransferase (Pyrococcus abyssi (strain GE5 / Orsay)).